Consider the following 238-residue polypeptide: Ribonuclease PH (238 aa).

Phosphate-binding positions include arginine 86 and 124–126 (GTR).

Belongs to the RNase PH family. Homohexameric ring arranged as a trimer of dimers.

The enzyme catalyses tRNA(n+1) + phosphate = tRNA(n) + a ribonucleoside 5'-diphosphate. In terms of biological role, phosphorolytic 3'-5' exoribonuclease that plays an important role in tRNA 3'-end maturation. Removes nucleotide residues following the 3'-CCA terminus of tRNAs; can also add nucleotides to the ends of RNA molecules by using nucleoside diphosphates as substrates, but this may not be physiologically important. Probably plays a role in initiation of 16S rRNA degradation (leading to ribosome degradation) during starvation. The chain is Ribonuclease PH from Geotalea uraniireducens (strain Rf4) (Geobacter uraniireducens).